The chain runs to 309 residues: Aspartate carbamoyltransferase catalytic subunit (309 aa).

Carbamoyl phosphate is bound by residues R48 and T49. K76 contributes to the L-aspartate binding site. Carbamoyl phosphate is bound by residues R98, H128, and Q131. 2 residues coordinate L-aspartate: R161 and R211. Residues A250 and P251 each coordinate carbamoyl phosphate.

This sequence belongs to the aspartate/ornithine carbamoyltransferase superfamily. ATCase family. Heterododecamer (2C3:3R2) of six catalytic PyrB chains organized as two trimers (C3), and six regulatory PyrI chains organized as three dimers (R2).

It catalyses the reaction carbamoyl phosphate + L-aspartate = N-carbamoyl-L-aspartate + phosphate + H(+). Its pathway is pyrimidine metabolism; UMP biosynthesis via de novo pathway; (S)-dihydroorotate from bicarbonate: step 2/3. In terms of biological role, catalyzes the condensation of carbamoyl phosphate and aspartate to form carbamoyl aspartate and inorganic phosphate, the committed step in the de novo pyrimidine nucleotide biosynthesis pathway. This chain is Aspartate carbamoyltransferase catalytic subunit, found in Oceanobacillus iheyensis (strain DSM 14371 / CIP 107618 / JCM 11309 / KCTC 3954 / HTE831).